A 2316-amino-acid polypeptide reads, in one-letter code: Receptor-type tyrosine-protein phosphatase zeta (2316 aa).

The first 24 residues, 1–24 (MRILQSFLACVQLLCVCRLDWAYG), serve as a signal peptide directing secretion. Residues 25–1637 (YYRQQRKLVE…LAEGLESEKK (1613 aa)) lie on the Extracellular side of the membrane. The region spanning 36–300 (IGWSYTGALN…KFSRQVFSSY (265 aa)) is the Alpha-carbonic anhydrase domain. Intrachain disulfides connect Cys56/Cys240 and Cys133/Cys264. 7 N-linked (GlcNAc...) asparagine glycosylation sites follow: Asn105, Asn134, Asn223, Asn232, Asn324, Asn381, and Asn497. The 100-residue stretch at 314-413 (EPENVQADPE…LIVDMPTEDA (100 aa)) folds into the Fibronectin type-III domain. Disordered stretches follow at residues 433–499 (YGKG…LNTS) and 518–537 (LPSQIGTNLPPHSVEGTSAS). Asn552 carries an N-linked (GlcNAc...) asparagine glycan. 2 positions are modified to phosphoserine: Ser572 and Ser576. Disordered stretches follow at residues 586–624 (KLDSGADDSSGSSPASSTVPFSTDNLSHGYTSSSDTPEA) and 636–720 (RNAL…EMPH). Residues 592–602 (DDSSGSSPASS) show a composition bias toward low complexity. A glycan (O-linked (Xyl...) (chondroitin sulfate) serine) is linked at Ser595. Positions 603–621 (TVPFSTDNLSHGYTSSSDT) are enriched in polar residues. N-linked (GlcNAc...) asparagine glycosylation occurs at Asn610. Position 645 is a phosphoserine; alternate (Ser645). A glycan (O-linked (Xyl...) (chondroitin sulfate) serine; alternate) is linked at Ser645. Ser647 carries the phosphoserine modification. A compositionally biased stretch (polar residues) spans 666-675 (TDLTTQSETG). The N-linked (GlcNAc...) asparagine glycan is linked to Asn685. The segment covering 699–711 (ETFSPDATASRGP) has biased composition (polar residues). The N-linked (GlcNAc...) asparagine glycan is linked to Asn786. The O-linked (Xyl...) (chondroitin sulfate) serine glycan is linked to Ser1005. N-linked (GlcNAc...) asparagine glycans are attached at residues Asn1025 and Asn1058. 4 disordered regions span residues 1141 to 1172 (QASGDTWLKPGLSTNSEPALSDTASSEVSHPS), 1204 to 1228 (KTALPSGPRDPVLTETPMVEQSSSS), 1401 to 1521 (LLPS…DGRE), and 1545 to 1622 (TSDE…NSSH). Residues 1152 to 1172 (LSTNSEPALSDTASSEVSHPS) are compositionally biased toward polar residues. Residues 1401 to 1413 (LLPSKATSKPTHS) show a composition bias toward polar residues. Residues 1425–1439 (EDGDDYDDDDYDDID) are compositionally biased toward acidic residues. N-linked (GlcNAc...) asparagine glycosylation is present at Asn1463. The span at 1464–1478 (DSDTQESSLVDQSDP) shows a compositional bias: polar residues. Ser1550 and Ser1552 each carry an O-linked (Xyl...) (chondroitin sulfate) serine glycan. Polar residues-rich tracts occupy residues 1555-1569 (GTSDSLNDNETSTDF) and 1595-1609 (PRSSTPSVTSGHSGV). N-linked (GlcNAc...) asparagine glycosylation is present at Asn1563. The span at 1610–1621 (SNSSEAEASNSS) shows a compositional bias: low complexity. 2 N-linked (GlcNAc...) asparagine glycosylation sites follow: Asn1611 and Asn1619. Residues 1638–1663 (AVIPLVIVSALTFICLVVLVGILIYW) traverse the membrane as a helical segment. The Cytoplasmic portion of the chain corresponds to 1664-2316 (RKCFQTAHFY…NIAESLESLV (653 aa)). A phosphothreonine mark is found at Thr1685 and Thr1688. Tyrosine-protein phosphatase domains follow at residues 1718–1993 (FTEE…LVEA) and 2024–2283 (LEKQ…VLSL). Residues Asp1902, 1934 to 1940 (CSAGVGR), and Gln1978 contribute to the substrate site. Residue Cys1934 is the Phosphocysteine intermediate of the active site. Ser2056 is subject to Phosphoserine.

It belongs to the protein-tyrosine phosphatase family. Receptor class 5 subfamily. As to quaternary structure, interacts with tenascin. Interacts with N-CAM and NG-CAM. The carbonic-anhydrase like domain interacts with CNTN1 (contactin). Interacts with PTN. Interaction with PTN promotes formation of homooligomers; oligomerization impairs phosphatase activity. Interacts (via chondroitin sulfate chains) with MDK (via C-terminal); this interaction is inhibited by PTN; this interaction promotes neuronal migration. As to expression, nervous tissue specific.

It localises to the cell membrane. It is found in the secreted. The enzyme catalyses O-phospho-L-tyrosyl-[protein] + H2O = L-tyrosyl-[protein] + phosphate. Functionally, protein tyrosine phosphatase that negatively regulates oligodendrocyte precursor proliferation in the embryonic spinal cord. Required for normal differentiation of the precursor cells into mature, fully myelinating oligodendrocytes. May play a role in protecting oligondendrocytes against apoptosis. May play a role in the establishment of contextual memory, probably via the dephosphorylation of proteins that are part of important signaling cascades. Isoform 3 (phosphacan), previously designated 3F8 chondroitin sulfate proteoglycan or 3H1 keratan sulfate proteoglycan depending on the glycosylation status, is a soluble nervous tissue-specific proteoglycan. It is synthesized by glia and binds to neurons and to the neural cell adhesion molecules tenascin, N-CAM or NG-CAM but not to laminin and fibronectin. Phosphacan acts as a potent inhibitor of cell adhesion and neurite outgrowth. This Rattus norvegicus (Rat) protein is Receptor-type tyrosine-protein phosphatase zeta (Ptprz1).